A 141-amino-acid polypeptide reads, in one-letter code: MLSPKRTRFRKQHRGRLKGISTRGNRICFGRFGLQALEPSWITSRQIEAGRRAITRYARRGGKLWIRIFPDKPITMRPAETRMGSGKGSPEYWVAVVKPGRILYEMSGVSETIARAAMRIAAFKMPIKTQFIKTPVLATIQ.

It belongs to the universal ribosomal protein uL16 family. In terms of assembly, part of the 50S ribosomal subunit.

The protein localises to the plastid. It is found in the chloroplast. The polypeptide is Large ribosomal subunit protein uL16c (Zygnema circumcarinatum (Green alga)).